Here is a 180-residue protein sequence, read N- to C-terminus: NADH-quinone oxidoreductase subunit I (180 aa).

4Fe-4S ferredoxin-type domains are found at residues isoleucine 48–alanine 80 and glutamate 90–aspartate 119. The [4Fe-4S] cluster site is built by cysteine 60, cysteine 63, cysteine 66, cysteine 70, cysteine 99, cysteine 102, cysteine 105, and cysteine 109. The segment at glycine 160–proline 180 is disordered.

This sequence belongs to the complex I 23 kDa subunit family. In terms of assembly, NDH-1 is composed of 14 different subunits. Subunits NuoA, H, J, K, L, M, N constitute the membrane sector of the complex. [4Fe-4S] cluster is required as a cofactor.

The protein localises to the cell inner membrane. The catalysed reaction is a quinone + NADH + 5 H(+)(in) = a quinol + NAD(+) + 4 H(+)(out). NDH-1 shuttles electrons from NADH, via FMN and iron-sulfur (Fe-S) centers, to quinones in the respiratory chain. The immediate electron acceptor for the enzyme in this species is believed to be ubiquinone. Couples the redox reaction to proton translocation (for every two electrons transferred, four hydrogen ions are translocated across the cytoplasmic membrane), and thus conserves the redox energy in a proton gradient. The chain is NADH-quinone oxidoreductase subunit I from Tolumonas auensis (strain DSM 9187 / NBRC 110442 / TA 4).